Consider the following 222-residue polypeptide: Large ribosomal subunit protein uL11c (222 aa).

Positions 1 to 20 (MASSSLSTLCSSTSSSLHPN) are disordered. The N-terminal 62 residues, 1-62 (MASSSLSTLC…TPRFLTVIAM (62 aa)), are a transit peptide targeting the chloroplast.

Belongs to the universal ribosomal protein uL11 family. In terms of assembly, part of the ribosomal stalk of the 50S ribosomal subunit. Interacts with L10 and the large rRNA to form the base of the stalk. L10 forms an elongated spine to which L12 dimers bind in a sequential fashion forming a multimeric L10(L12)X complex.

It is found in the plastid. It localises to the chloroplast. Its function is as follows. Forms part of the ribosomal stalk which helps the ribosome interact with GTP-bound translation factors. This is Large ribosomal subunit protein uL11c (RPL11) from Arabidopsis thaliana (Mouse-ear cress).